The chain runs to 170 residues: Flavodoxin (170 aa).

The Flavodoxin-like domain maps to 4–165 (IGLFYGTQTG…RIKTWVSQLK (162 aa)).

It belongs to the flavodoxin family. FMN is required as a cofactor.

Low-potential electron donor to a number of redox enzymes. The chain is Flavodoxin (isiB) from Synechococcus elongatus (strain ATCC 33912 / PCC 7942 / FACHB-805) (Anacystis nidulans R2).